Reading from the N-terminus, the 196-residue chain is Pyridoxal 5'-phosphate synthase subunit PdxT (196 aa).

46–48 (GES) contributes to the L-glutamine binding site. C78 functions as the Nucleophile in the catalytic mechanism. L-glutamine-binding positions include R105 and 133–134 (IR). Catalysis depends on charge relay system residues H169 and E171.

The protein belongs to the glutaminase PdxT/SNO family. In terms of assembly, in the presence of PdxS, forms a dodecamer of heterodimers. Only shows activity in the heterodimer.

The catalysed reaction is aldehydo-D-ribose 5-phosphate + D-glyceraldehyde 3-phosphate + L-glutamine = pyridoxal 5'-phosphate + L-glutamate + phosphate + 3 H2O + H(+). It catalyses the reaction L-glutamine + H2O = L-glutamate + NH4(+). The protein operates within cofactor biosynthesis; pyridoxal 5'-phosphate biosynthesis. Its function is as follows. Catalyzes the hydrolysis of glutamine to glutamate and ammonia as part of the biosynthesis of pyridoxal 5'-phosphate. The resulting ammonia molecule is channeled to the active site of PdxS. The sequence is that of Pyridoxal 5'-phosphate synthase subunit PdxT from Geobacillus kaustophilus (strain HTA426).